A 328-amino-acid chain; its full sequence is Bidirectional sugar transporter SWEET16 (328 aa).

At 1–5 (MADPS) the chain is on the extracellular side. Residues 6-26 (FFVGIVGNVISILVFASPIAT) traverse the membrane as a helical segment. The region spanning 6–92 (FFVGIVGNVI…TLYLAYAPRE (87 aa)) is the MtN3/slv 1 domain. The Cytoplasmic portion of the chain corresponds to 27 to 38 (FRRIVRSKSTEE). Residues 39 to 56 (FRWLPYVTTLLSTSLWTF) traverse the membrane as a helical segment. Residues 57 to 63 (YGLHKPG) lie on the Extracellular side of the membrane. The helical transmembrane segment at 64 to 84 (GLLIVTVNGSGAALEAIYVTL) threads the bilayer. At 85 to 99 (YLAYAPRETKAKMVK) the chain is on the cytoplasmic side. Residues 100–120 (VVLAVNVGALAAVVAVALVAL) traverse the membrane as a helical segment. At 121–125 (HGGVR) the chain is on the extracellular side. Residues 126–146 (LFVVGVLCAALTIGMYAAPMA) traverse the membrane as a helical segment. One can recognise a MtN3/slv 2 domain in the interval 127 to 213 (FVVGVLCAAL…LYMAYRRTKK (87 aa)). Residues 147–161 (AMRTVVKTRSVEYMP) are Cytoplasmic-facing. Residues 162-182 (FSLSFFLFLNGGVWSVYSLLV) traverse the membrane as a helical segment. Residues 183-185 (KDY) lie on the Extracellular side of the membrane. Residues 186–206 (FIGIPNAIGFALGTAQLALYM) form a helical membrane-spanning segment. At 207 to 328 (AYRRTKKPAG…ATTAGPGDRH (122 aa)) the chain is on the cytoplasmic side. Over residues 288–299 (HQHHGGHHHHHR) the composition is skewed to basic residues. A disordered region spans residues 288-328 (HQHHGGHHHHHRFDTVPDDDDEAVAAGGTTPATTAGPGDRH). A compositionally biased stretch (low complexity) spans 312–328 (AAGGTTPATTAGPGDRH).

It belongs to the SWEET sugar transporter family. Forms homooligomers and/or heterooligomers.

It is found in the cell membrane. Its function is as follows. Mediates both low-affinity uptake and efflux of sugar across the plasma membrane. The sequence is that of Bidirectional sugar transporter SWEET16 (SWEET16) from Oryza sativa subsp. japonica (Rice).